The sequence spans 323 residues: tRNA dimethylallyltransferase (323 aa).

Residue 12–19 (GPTAAGKT) coordinates ATP. Residue 14-19 (TAAGKT) participates in substrate binding. Interaction with substrate tRNA regions lie at residues 37-40 (DSAL) and 161-165 (QRLIR).

This sequence belongs to the IPP transferase family. Monomer. The cofactor is Mg(2+).

It carries out the reaction adenosine(37) in tRNA + dimethylallyl diphosphate = N(6)-dimethylallyladenosine(37) in tRNA + diphosphate. Catalyzes the transfer of a dimethylallyl group onto the adenine at position 37 in tRNAs that read codons beginning with uridine, leading to the formation of N6-(dimethylallyl)adenosine (i(6)A). This Pseudomonas syringae pv. syringae (strain B728a) protein is tRNA dimethylallyltransferase.